A 555-amino-acid chain; its full sequence is Urocanate hydratase (555 aa).

NAD(+) contacts are provided by residues 52-53 (GG), glutamine 130, 176-178 (GMG), glutamate 196, arginine 201, 242-243 (NA), 263-267 (QTSAH), 273-274 (YL), and tyrosine 322. Cysteine 410 is a catalytic residue. Glycine 492 contacts NAD(+).

This sequence belongs to the urocanase family. The cofactor is NAD(+).

The protein localises to the cytoplasm. It catalyses the reaction 4-imidazolone-5-propanoate = trans-urocanate + H2O. Its pathway is amino-acid degradation; L-histidine degradation into L-glutamate; N-formimidoyl-L-glutamate from L-histidine: step 2/3. Functionally, catalyzes the conversion of urocanate to 4-imidazolone-5-propionate. This Shewanella sp. (strain W3-18-1) protein is Urocanate hydratase.